Consider the following 103-residue polypeptide: uncharacterized protein (103 aa).

This is an uncharacterized protein from Escherichia coli (strain UTI89 / UPEC).